Here is a 247-residue protein sequence, read N- to C-terminus: MATTPLLLLLLTAVFLSTEITAQRAAPAPGPAGPINITAILEKGGQFVTLIRLLNTTQIGNQINIQINSSSEGMTVLAPTDNAFQNLKPGTLNKLSPDDQVKLILYHVSPKFYTLEDLLSVSNPVRTQASGRDVGGVYGLNFTGQGNQVNVSTGVVETRLSTSLRQERPLAVYVVDMVLLPEEMFGERKISPMAPPPKSKSPDVSDDSESSKKAAAPSESEKSGSGEMNTGLGLGLGLVVLCLKFLL.

The N-terminal stretch at 1 to 25 is a signal peptide; sequence MATTPLLLLLLTAVFLSTEITAQRA. An FAS1 domain is found at 34–179; it reads PINITAILEK…LAVYVVDMVL (146 aa). Asparagine 36, asparagine 55, asparagine 68, asparagine 141, and asparagine 150 each carry an N-linked (GlcNAc...) asparagine glycan. The tract at residues 189–228 is disordered; sequence KISPMAPPPKSKSPDVSDDSESSKKAAAPSESEKSGSGEM. Glycine 224 carries the GPI-anchor amidated glycine lipid modification. The propeptide at 225 to 247 is removed in mature form; that stretch reads SGEMNTGLGLGLGLVVLCLKFLL.

It belongs to the fasciclin-like AGP family.

The protein resides in the cell membrane. In terms of biological role, may be a cell surface adhesion protein. The chain is Fasciclin-like arabinogalactan protein 13 (FLA13) from Arabidopsis thaliana (Mouse-ear cress).